The primary structure comprises 318 residues: NADH-ubiquinone oxidoreductase chain 1 (318 aa).

The next 8 membrane-spanning stretches (helical) occupy residues 3-23, 69-89, 102-122, 144-164, 171-191, 222-242, 253-273, and 294-314; these read LINL…LTLL, MLFI…WTPL, MLFI…SGWA, VTLA…TLLS, YIWL…STLA, LFFL…IILF, ELYT…FLWI, and LPLT…LAGI.

This sequence belongs to the complex I subunit 1 family. As to quaternary structure, core subunit of respiratory chain NADH dehydrogenase (Complex I) which is composed of 45 different subunits.

The protein resides in the mitochondrion inner membrane. The catalysed reaction is a ubiquinone + NADH + 5 H(+)(in) = a ubiquinol + NAD(+) + 4 H(+)(out). Functionally, core subunit of the mitochondrial membrane respiratory chain NADH dehydrogenase (Complex I) which catalyzes electron transfer from NADH through the respiratory chain, using ubiquinone as an electron acceptor. Essential for the catalytic activity and assembly of complex I. This chain is NADH-ubiquinone oxidoreductase chain 1 (MT-ND1), found in Murina suilla (Brown tube-nosed bat).